Here is a 528-residue protein sequence, read N- to C-terminus: ATP synthase subunit alpha (528 aa).

Position 169-176 (Gly169–Thr176) interacts with ATP.

It belongs to the ATPase alpha/beta chains family. F-type ATPases have 2 components, CF(1) - the catalytic core - and CF(0) - the membrane proton channel. CF(1) has five subunits: alpha(3), beta(3), gamma(1), delta(1), epsilon(1). CF(0) has three main subunits: a(1), b(2) and c(9-12). The alpha and beta chains form an alternating ring which encloses part of the gamma chain. CF(1) is attached to CF(0) by a central stalk formed by the gamma and epsilon chains, while a peripheral stalk is formed by the delta and b chains.

Its subcellular location is the cell membrane. It catalyses the reaction ATP + H2O + 4 H(+)(in) = ADP + phosphate + 5 H(+)(out). Functionally, produces ATP from ADP in the presence of a proton gradient across the membrane. The alpha chain is a regulatory subunit. This chain is ATP synthase subunit alpha, found in Mycoplasmopsis agalactiae (strain NCTC 10123 / CIP 59.7 / PG2) (Mycoplasma agalactiae).